A 78-amino-acid polypeptide reads, in one-letter code: Large ribosomal subunit protein bL28 (78 aa).

The tract at residues 1–20 is disordered; that stretch reads MSRVCQVTGKGPVTGNNISH.

Belongs to the bacterial ribosomal protein bL28 family.

This chain is Large ribosomal subunit protein bL28, found in Azotobacter vinelandii (strain DJ / ATCC BAA-1303).